A 73-amino-acid chain; its full sequence is uncharacterized protein (73 aa).

An HTH deoR-type domain is found at 8–63; the sequence is MLTRIKSVYMFIQEKGLVTTQELVDEFGITPRTIQRDLNVLAYNDLVHSPSRGKWE. A DNA-binding region (H-T-H motif) is located at residues 25-44; it reads VTTQELVDEFGITPRTIQRD.

This is an uncharacterized protein from Bacillus subtilis (strain 168).